Here is a 127-residue protein sequence, read N- to C-terminus: uncharacterized protein (127 aa).

This is an uncharacterized protein from Thermoproteus tenax (TTV1).